We begin with the raw amino-acid sequence, 266 residues long: Acetyl esterase (266 aa).

The sequence is that of Acetyl esterase (xynC) from Caldicellulosiruptor saccharolyticus (Caldocellum saccharolyticum).